A 135-amino-acid chain; its full sequence is uncharacterized protein (135 aa).

This is an uncharacterized protein from Sinorhizobium fredii (strain NBRC 101917 / NGR234).